Consider the following 880-residue polypeptide: Alanine--tRNA ligase (880 aa).

4 residues coordinate Zn(2+): H567, H571, C669, and H673.

This sequence belongs to the class-II aminoacyl-tRNA synthetase family. It depends on Zn(2+) as a cofactor.

It localises to the cytoplasm. The catalysed reaction is tRNA(Ala) + L-alanine + ATP = L-alanyl-tRNA(Ala) + AMP + diphosphate. Catalyzes the attachment of alanine to tRNA(Ala) in a two-step reaction: alanine is first activated by ATP to form Ala-AMP and then transferred to the acceptor end of tRNA(Ala). Also edits incorrectly charged Ser-tRNA(Ala) and Gly-tRNA(Ala) via its editing domain. This is Alanine--tRNA ligase from Bacillus cereus (strain ZK / E33L).